The following is a 219-amino-acid chain: ATP-dependent dethiobiotin synthetase BioD (219 aa).

Position 12–17 (12–17 (GVGKTI)) interacts with ATP. Thr-16 contacts Mg(2+). The active site involves Lys-32. Residues Asp-43 and 96–99 (ETSG) contribute to the ATP site. 2 residues coordinate Mg(2+): Asp-43 and Glu-96.

This sequence belongs to the dethiobiotin synthetase family. In terms of assembly, homodimer. It depends on Mg(2+) as a cofactor.

The protein resides in the cytoplasm. The catalysed reaction is (7R,8S)-7,8-diammoniononanoate + CO2 + ATP = (4R,5S)-dethiobiotin + ADP + phosphate + 3 H(+). Its pathway is cofactor biosynthesis; biotin biosynthesis; biotin from 7,8-diaminononanoate: step 1/2. Functionally, catalyzes a mechanistically unusual reaction, the ATP-dependent insertion of CO2 between the N7 and N8 nitrogen atoms of 7,8-diaminopelargonic acid (DAPA, also called 7,8-diammoniononanoate) to form a ureido ring. The chain is ATP-dependent dethiobiotin synthetase BioD from Chlamydia pneumoniae (Chlamydophila pneumoniae).